The chain runs to 299 residues: Apolipoprotein E (299 aa).

A signal peptide spans 1–18 (MKVLWAVLVVTLLAGCRA). 7 consecutive repeat copies span residues 74–95 (LLME…QELA), 96–117 (PMAE…ARLG), 118–139 (ADME…AMLG), 140–161 (QSAE…KRLL), 162–183 (RDAE…EGAE), 184–205 (RGVS…LRSA), and 224–245 (GRLE…EQME). The segment at 74-245 (LLMEDTMKEV…RLDVVREQME (172 aa)) is 8 X 22 AA approximate tandem repeats. The residue at position 137 (Met-137) is a Methionine sulfoxide. Residue Ser-141 is modified to Phosphoserine. An LDL and other lipoprotein receptors binding region spans residues 152–162 (HLRKMRKRLLR). Heparin is bound at residue 156 to 159 (MRKR). The segment at 204–273 (SALTSQPLRE…GWFEPMVEDM (70 aa)) is lipid-binding and lipoprotein association. A heparin-binding site is contributed by 219–226 (GERLRGRL). Residues 261–273 (RLKGWFEPMVEDM) form a specificity for association with VLDL region.

Belongs to the apolipoprotein A1/A4/E family. As to quaternary structure, homotetramer. May interact with ABCA1; functionally associated with ABCA1 in the biogenesis of HDLs. May interact with APP/A4 amyloid-beta peptide; the interaction is extremely stable in vitro but its physiological significance is unclear. May interact with MAPT. May interact with MAP2. In the cerebrospinal fluid, interacts with secreted SORL1. Interacts with PMEL; this allows the loading of PMEL luminal fragment on ILVs to induce fibril nucleation. Post-translationally, APOE exists as multiple glycosylated and sialylated glycoforms within cells and in plasma. The extent of glycosylation and sialylation are tissue and context specific. In terms of processing, glycated in plasma VLDL. Phosphorylated by FAM20C in the extracellular medium.

The protein localises to the secreted. The protein resides in the extracellular space. It localises to the extracellular matrix. It is found in the extracellular vesicle. Its subcellular location is the endosome. The protein localises to the multivesicular body. Its function is as follows. APOE is an apolipoprotein, a protein associating with lipid particles, that mainly functions in lipoprotein-mediated lipid transport between organs via the plasma and interstitial fluids. APOE is a core component of plasma lipoproteins and is involved in their production, conversion and clearance. Apolipoproteins are amphipathic molecules that interact both with lipids of the lipoprotein particle core and the aqueous environment of the plasma. As such, APOE associates with chylomicrons, chylomicron remnants, very low density lipoproteins (VLDL) and intermediate density lipoproteins (IDL) but shows a preferential binding to high-density lipoproteins (HDL). It also binds a wide range of cellular receptors including the LDL receptor/LDLR, the LDL receptor-related proteins LRP1, LRP2 and LRP8 and the very low-density lipoprotein receptor/VLDLR that mediate the cellular uptake of the APOE-containing lipoprotein particles. Finally, APOE also has a heparin-binding activity and binds heparan-sulfate proteoglycans on the surface of cells, a property that supports the capture and the receptor-mediated uptake of APOE-containing lipoproteins by cells. A main function of APOE is to mediate lipoprotein clearance through the uptake of chylomicrons, VLDLs, and HDLs by hepatocytes. APOE is also involved in the biosynthesis by the liver of VLDLs as well as their uptake by peripheral tissues ensuring the delivery of triglycerides and energy storage in muscle, heart and adipose tissues. By participating in the lipoprotein-mediated distribution of lipids among tissues, APOE plays a critical role in plasma and tissues lipid homeostasis. APOE is also involved in two steps of reverse cholesterol transport, the HDLs-mediated transport of cholesterol from peripheral tissues to the liver, and thereby plays an important role in cholesterol homeostasis. First, it is functionally associated with ABCA1 in the biogenesis of HDLs in tissues. Second, it is enriched in circulating HDLs and mediates their uptake by hepatocytes. APOE also plays an important role in lipid transport in the central nervous system, regulating neuron survival and sprouting. In Erethizon dorsatum (North American porcupine), this protein is Apolipoprotein E (APOE).